The primary structure comprises 60 residues: Large ribosomal subunit protein uL30 (60 aa).

The protein belongs to the universal ribosomal protein uL30 family. In terms of assembly, part of the 50S ribosomal subunit.

The protein is Large ribosomal subunit protein uL30 of Streptococcus equi subsp. equi (strain 4047).